The sequence spans 94 residues: Conotoxin Cal22a (94 aa).

The N-terminal stretch at 1 to 24 (MMSTKGITLFLCLLLLALATSVNG) is a signal peptide. Positions 25–44 (GQGTRRSRMTRALHGGRPSA) are excised as a propeptide.

In terms of processing, contains 4 disulfide bonds. As to expression, expressed by the venom duct.

It localises to the secreted. In terms of biological role, probable neurotoxin with unknown target. Possibly targets ion channels. The sequence is that of Conotoxin Cal22a from Californiconus californicus (California cone).